Here is a 689-residue protein sequence, read N- to C-terminus: MADLEAVLADVSYLMAMEKSKATPAARASKKILLPEPSIRSVMQKYLEDRGEVTFEKIFSQKLGYLLFREFCLNHMEEAKPLVEFYDEIKKYEKLDSEEERTVKSREIFDLYIMKELLSCSHLFSKSATEHVQSRLLKKQVPTDLFQPYIEEICQRFRDDVFQKFIESEKFTRFCQWKNVELNIHLTMNDFSVHRIIGRGGFGEVYGCRKADTGKMYAMKCLDKKRIKMKQGETLALNERIMLSLVSTGDCPFIVCMSYAFHTPDKLSFILDLMNGGDLHYHLSQHGVFSESDMRFYAAEIILGLEHMHSRFVVYRDLKPANILLDEFGHVRISDLGLACDFSKKKPHASVGTHGYMAPEVLQKGVAYDSSADWFSLGCMLFKLLRGHSPFRQHKTKDKHEIDRMTLTMAVELPDSFSPELRSLLEGLLQRDVNRSLGCLGRGAQEVKEDPFFKAVDWQMVLLQKYPPPLIPPRGEVNAADAFDIGSFDEEDTKGIKLLDSDQELYRNFPLTISERWQQEVAETVFDTVNSETDRLEARKKAKNKQLGHEDDYALGKDCIMHGYMSKMGNPFLTQWQRRYFYLFPNRLEWRAEGEAPQSLLTMEEIQSVEETQIKDRKCILLKIRGGKQFILQCDSDPELVQWKKELRDVYREAQQLLQRVPKMKNKPRSPVVELSKMPLTQRGSANGL.

Residues 1-190 form an N-terminal region; that stretch reads MADLEAVLAD…ELNIHLTMND (190 aa). In terms of domain architecture, RGS spans 54 to 175; the sequence is TFEKIFSQKL…IESEKFTRFC (122 aa). The 263-residue stretch at 191–453 folds into the Protein kinase domain; that stretch reads FSVHRIIGRG…AQEVKEDPFF (263 aa). ATP contacts are provided by residues 197 to 205 and Lys-220; that span reads IGRGGFGEV. Residue Asp-317 is the Proton acceptor of the active site. The AGC-kinase C-terminal domain occupies 454–521; sequence KAVDWQMVLL…TISERWQQEV (68 aa). Positions 558 to 652 constitute a PH domain; it reads DCIMHGYMSK…WKKELRDVYR (95 aa). The tract at residues 665-689 is disordered; it reads KNKPRSPVVELSKMPLTQRGSANGL. Phosphoserine is present on Ser-670.

It belongs to the protein kinase superfamily. AGC Ser/Thr protein kinase family. GPRK subfamily. As to quaternary structure, interacts with the heterodimer formed by GNB1 and GNG2. Interacts with GIT1. Interacts with, and phosphorylates chemokine-stimulated CCR5. Interacts with ARRB1. Interacts with LPAR1 and LPAR2. Interacts with RALA in response to LPAR1 activation. ADRBK1 and RALA mutually inhibit each other's binding to LPAR1. Interacts with ADRB2.

The protein resides in the cytoplasm. Its subcellular location is the cell membrane. It is found in the postsynapse. It localises to the presynapse. The enzyme catalyses [beta-adrenergic receptor] + ATP = [beta-adrenergic receptor]-phosphate + ADP + H(+). In contrast to other AGC family kinases, the catalytic activity is solely regulated by the binding of substrates and ligands, not by phosphorylation of the kinase domain. Specifically phosphorylates the agonist-occupied form of the beta-adrenergic and closely related receptors, probably inducing a desensitization of them. Does not act on HTR1B/5-hydroxytryptamine 1B receptor. Key regulator of LPAR1 signaling. Competes with RALA for binding to LPAR1 thus affecting the signaling properties of the receptor. Desensitizes LPAR1 and LPAR2 in a phosphorylation-independent manner. Inhibits relaxation of airway smooth muscle in response to blue light. The sequence is that of Beta-adrenergic receptor kinase 1 from Didelphis virginiana (North American opossum).